Reading from the N-terminus, the 485-residue chain is Glutamate--tRNA ligase 1 (485 aa).

A 'HIGH' region motif is present at residues 10 to 20 (PSPTGAIHIGN). Positions 252-256 (KLSKR) match the 'KMSKS' region motif. Position 255 (Lys-255) interacts with ATP.

This sequence belongs to the class-I aminoacyl-tRNA synthetase family. Glutamate--tRNA ligase type 1 subfamily. As to quaternary structure, monomer.

Its subcellular location is the cytoplasm. It catalyses the reaction tRNA(Glu) + L-glutamate + ATP = L-glutamyl-tRNA(Glu) + AMP + diphosphate. In terms of biological role, catalyzes the attachment of glutamate to tRNA(Glu) in a two-step reaction: glutamate is first activated by ATP to form Glu-AMP and then transferred to the acceptor end of tRNA(Glu). This is Glutamate--tRNA ligase 1 from Thermoanaerobacter sp. (strain X514).